The chain runs to 332 residues: Iron-utilization periplasmic protein (332 aa).

Residues 1–23 (MQFKHFKLATLAAALAFSANSFA) form the signal peptide. Residues His-32, Glu-80, Tyr-218, and Tyr-219 each contribute to the Fe cation site.

It belongs to the bacterial solute-binding protein 1 family. As to quaternary structure, the complex is composed of two ATP-binding proteins (FbpC), two transmembrane proteins (FbpB) and a solute-binding protein (FbpA).

The protein localises to the periplasm. Functionally, part of the ABC transporter complex FbpABC (TC 3.A.1.10.1) involved in Fe(3+) ions import. This protein specifically binds Fe(3+) and is involved in its transmembrane transport. This chain is Iron-utilization periplasmic protein (fbpA), found in Haemophilus influenzae (strain ATCC 51907 / DSM 11121 / KW20 / Rd).